Reading from the N-terminus, the 104-residue chain is uncharacterized protein (104 aa).

The signal sequence occupies residues 1–25; it reads MVSSFFMASTLLAISSCFNSSISRA. Residues 79 to 99 traverse the membrane as a helical segment; that stretch reads IPVVIVVEISSTLVLLLSAFL.

It is found in the membrane. This is an uncharacterized protein from Saccharomyces cerevisiae (strain ATCC 204508 / S288c) (Baker's yeast).